The primary structure comprises 229 residues: PKHD-type hydroxylase RPD_3334 (229 aa).

Residues 78 to 180 (QIFPPLFNRY…RVASFFWLQS (103 aa)) form the Fe2OG dioxygenase domain. Residues H98, D100, and H161 each contribute to the Fe cation site. Residue R171 coordinates 2-oxoglutarate.

The cofactor is Fe(2+). It depends on L-ascorbate as a cofactor.

This chain is PKHD-type hydroxylase RPD_3334, found in Rhodopseudomonas palustris (strain BisB5).